A 370-amino-acid polypeptide reads, in one-letter code: Anhydro-N-acetylmuramic acid kinase (370 aa).

13–20 (GTSMDGVD) is a binding site for ATP.

The protein belongs to the anhydro-N-acetylmuramic acid kinase family.

It carries out the reaction 1,6-anhydro-N-acetyl-beta-muramate + ATP + H2O = N-acetyl-D-muramate 6-phosphate + ADP + H(+). It functions in the pathway amino-sugar metabolism; 1,6-anhydro-N-acetylmuramate degradation. The protein operates within cell wall biogenesis; peptidoglycan recycling. In terms of biological role, catalyzes the specific phosphorylation of 1,6-anhydro-N-acetylmuramic acid (anhMurNAc) with the simultaneous cleavage of the 1,6-anhydro ring, generating MurNAc-6-P. Is required for the utilization of anhMurNAc either imported from the medium or derived from its own cell wall murein, and thus plays a role in cell wall recycling. The sequence is that of Anhydro-N-acetylmuramic acid kinase from Vibrio vulnificus (strain YJ016).